Consider the following 440-residue polypeptide: MKINSIIIGAPSSSSGKTTISIGIMRALSRRLRVQPFKVGPDYIDPGYHNIATGRFSSNLDTWMSSREKMKEIFIKRSTGSDISIIEGVMGLYDGKQPDKDTGSTAEVARTLKSPVIIVIDISAMARTAAAIILGLIKMDKRLRISGVILNNAGSDYHCSIVRTAIEKYTGIPVIGCVKRSDDLKIDDRYLGLKTAMEDDNSGKIDKIADIIERSVDLDLLIKISKESGDISFKSGLFSKKNVNRVRIAIAYDAAFNFYYYDNIEMLKMYGAEIVYFSPLNDYKLPEADGLYIGGGFPELFAERLSDNYSIKKDIMEFFNSGRPVFAECGGYMYLSRGIKINGKYYEMASIINGESYMDSLILGYRNIRAESNNILMMGGWHVKGHEFHYSRLNVNANAYKTERGPDGISTKNLLAGYMHLYFPSNPRIPERFVRSCYNV.

The GATase cobBQ-type domain maps to 247–428 (RIAIAYDAAF…MHLYFPSNPR (182 aa)). Cys-329 functions as the Nucleophile in the catalytic mechanism.

This sequence belongs to the CobB/CbiA family. The cofactor is Mg(2+).

The catalysed reaction is cob(II)yrinate + 2 L-glutamine + 2 ATP + 2 H2O = cob(II)yrinate a,c diamide + 2 L-glutamate + 2 ADP + 2 phosphate + 2 H(+). The protein operates within cofactor biosynthesis; adenosylcobalamin biosynthesis; cob(II)yrinate a,c-diamide from sirohydrochlorin (anaerobic route): step 10/10. Its function is as follows. Catalyzes the ATP-dependent amidation of the two carboxylate groups at positions a and c of cobyrinate, using either L-glutamine or ammonia as the nitrogen source. The polypeptide is Cobyrinate a,c-diamide synthase (Picrophilus torridus (strain ATCC 700027 / DSM 9790 / JCM 10055 / NBRC 100828 / KAW 2/3)).